A 463-amino-acid polypeptide reads, in one-letter code: Lariat debranching enzyme (463 aa).

A divalent metal cation-binding residues include cysteine 8, histidine 10, aspartate 33, and asparagine 78. The interval 118-148 (SGIYSAMDYKKGRYEGLPYNYKMLKSIYHTR) is lariat recognition loop. A divalent metal cation-binding residues include histidine 168, histidine 220, and histidine 222. Residues 250 to 324 (SGFSMKGLNE…QVTKFLALDK (75 aa)) form a disordered region. The span at 256 to 267 (GLNEPSQERLPV) shows a compositional bias: polar residues. Composition is skewed to basic and acidic residues over residues 276–289 (DEEG…EKQD) and 299–323 (CRKE…LALD).

This sequence belongs to the lariat debranching enzyme family. The cofactor is Fe(2+). Requires Zn(2+) as cofactor. It depends on Mn(2+) as a cofactor.

It is found in the nucleus. It localises to the cytoplasm. With respect to regulation, active in presence of diverse metals including Fe(2+), Zn(2+) and Mn(2+). Binds two metal cations in two adjacent alpha and beta metal-binding pockets. In terms of biological role, cleaves the 2'-5' phosphodiester linkage at the branch point of lariat intron pre-mRNAs after splicing and converts them into linear molecules that are subsequently degraded, thereby facilitating ribonucleotide turnover. In Schizosaccharomyces pombe (strain 972 / ATCC 24843) (Fission yeast), this protein is Lariat debranching enzyme (dbr1).